Consider the following 499-residue polypeptide: MILILLFLTAITVITVRLYRKVLRFPPGPFPLPLIGNAHQIAYQAWRRGGILPALDYYRKKYGNAYTLWLGPKASVSITDFETSQEVFVKQGKKCYNRQLAPILEHVTGGVGLLIANGENWAEMRRFTLLTFRQMGVGTNIMEKRIMDELNGRCLEIDAQIARNDRAIVDVKFFDLTVGSVINSFLIGKRFEDEEEFLKIKKLFDESSETFNIFDLNVPVWFLKTFLPSRFKLTWDSRHQIMDHVMKGVEERIRDIESGAYKIDPKKPNDVVDAFLSKMKKEEEIAGGQHPYYNLKSLKLVLHDLWLAGQGTTATTLYVGFMKLVNHPGIIQNIQKELLDITENGARDLTLKDRPNTPYLNATIAEIQRHASILNVNFWRINHETIHFNDYQVDPGTMIAAQVGVLHVNEELFDNPKDFNVEKYLKNPKLLQQVIPFGIGKRSCVGEQIAKSELYLVFGNILLRYNVKKHGSTPTNEDVYPYSSAKLPDVSGKLEFVKL.

Cys-444 is a binding site for heme.

Belongs to the cytochrome P450 family. It depends on heme as a cofactor. As to expression, expressed in hypodermis, intestine and vulva upon thiabendazole (TBZ) exposure.

Cytochromes P450 are a group of heme-thiolate monooxygenases. They oxidize a variety of structurally unrelated compounds, including steroids, fatty acids, and xenobiotics. Involved in the oxidative metabolism of thiabendazole (TBZ). Catalyzes the conversion of TBZ to its hydroxylated form. This chain is Probable cytochrome P450 cyp-35D1, found in Caenorhabditis elegans.